Here is a 309-residue protein sequence, read N- to C-terminus: HPr kinase/phosphorylase (309 aa).

Catalysis depends on residues histidine 138 and lysine 159. Residue 153–160 (GQSGVGKS) coordinates ATP. Serine 160 provides a ligand contact to Mg(2+). Catalysis depends on aspartate 177, which acts as the Proton acceptor; for phosphorylation activity. Proton donor; for dephosphorylation activity. The interval 201–210 (LEIRGLGIIN) is important for the catalytic mechanism of both phosphorylation and dephosphorylation. Residue glutamate 202 participates in Mg(2+) binding. Residue arginine 243 is part of the active site. Residues 264 to 269 (PVRPGR) are important for the catalytic mechanism of dephosphorylation.

This sequence belongs to the HPrK/P family. In terms of assembly, homohexamer. Mg(2+) is required as a cofactor.

The enzyme catalyses [HPr protein]-L-serine + ATP = [HPr protein]-O-phospho-L-serine + ADP + H(+). It catalyses the reaction [HPr protein]-O-phospho-L-serine + phosphate + H(+) = [HPr protein]-L-serine + diphosphate. In terms of biological role, catalyzes the ATP- as well as the pyrophosphate-dependent phosphorylation of a specific serine residue in HPr, a phosphocarrier protein of the phosphoenolpyruvate-dependent sugar phosphotransferase system (PTS). HprK/P also catalyzes the pyrophosphate-producing, inorganic phosphate-dependent dephosphorylation (phosphorolysis) of seryl-phosphorylated HPr (P-Ser-HPr). The two antagonistic activities of HprK/P are regulated by several intracellular metabolites, which change their concentration in response to the absence or presence of rapidly metabolisable carbon sources (glucose, fructose, etc.) in the growth medium. Also phosphorylates/dephosphorylates the HPr-like catabolite repression protein crh on a specific serine residue. Therefore, by controlling the phosphorylation state of HPr and crh, HPrK/P is a sensor enzyme that plays a major role in the regulation of carbon metabolism and sugar transport: it mediates carbon catabolite repression (CCR), and regulates PTS-catalyzed carbohydrate uptake and inducer exclusion. The protein is HPr kinase/phosphorylase of Bacillus cereus (strain B4264).